Here is a 609-residue protein sequence, read N- to C-terminus: ATP-dependent lipid A-core flippase (609 aa).

A run of 6 helical transmembrane segments spans residues 47 to 67 (LLAA…IYLI), 88 to 108 (ILML…VGSF), 167 to 187 (AIIT…VMFV), 190 to 210 (WQLS…ISII), 279 to 299 (VIQI…AIFG), and 305 to 325 (GSSW…AAIL). An ABC transmembrane type-1 domain is found at 47 to 340 (LLAAIGSIFF…LTKVNVVIQK (294 aa)). One can recognise an ABC transporter domain in the interval 372–606 (VTIKDLSFAF…GGLYTRLYQS (235 aa)). 404–411 (GKSGSGKT) serves as a coordination point for ATP.

It belongs to the ABC transporter superfamily. Lipid exporter (TC 3.A.1.106) family. In terms of assembly, homodimer.

The protein resides in the cell inner membrane. It catalyses the reaction ATP + H2O + lipid A-core oligosaccharideSide 1 = ADP + phosphate + lipid A-core oligosaccharideSide 2.. Functionally, involved in lipopolysaccharide (LPS) biosynthesis. Translocates lipid A-core from the inner to the outer leaflet of the inner membrane. Transmembrane domains (TMD) form a pore in the inner membrane and the ATP-binding domain (NBD) is responsible for energy generation. The polypeptide is ATP-dependent lipid A-core flippase (Francisella tularensis subsp. tularensis (strain FSC 198)).